A 370-amino-acid polypeptide reads, in one-letter code: 4-hydroxy-3-methylbut-2-en-1-yl diphosphate synthase (flavodoxin) (370 aa).

Residues Cys268, Cys271, Cys303, and Glu310 each contribute to the [4Fe-4S] cluster site.

This sequence belongs to the IspG family. [4Fe-4S] cluster serves as cofactor.

The catalysed reaction is (2E)-4-hydroxy-3-methylbut-2-enyl diphosphate + oxidized [flavodoxin] + H2O + 2 H(+) = 2-C-methyl-D-erythritol 2,4-cyclic diphosphate + reduced [flavodoxin]. The protein operates within isoprenoid biosynthesis; isopentenyl diphosphate biosynthesis via DXP pathway; isopentenyl diphosphate from 1-deoxy-D-xylulose 5-phosphate: step 5/6. Functionally, converts 2C-methyl-D-erythritol 2,4-cyclodiphosphate (ME-2,4cPP) into 1-hydroxy-2-methyl-2-(E)-butenyl 4-diphosphate. The protein is 4-hydroxy-3-methylbut-2-en-1-yl diphosphate synthase (flavodoxin) of Bacillus cereus (strain G9842).